Consider the following 415-residue polypeptide: MESLEQIGIKAKKASRYLAKLGIDEKNKALEAVADALTANAESIIAANEKDLVNAKANGMKPALIDRLTLDIKRINAMADGIRVLTGLEDPVGEVTGMKKRPNGLVIGTKRVPLGVVAIIYESRPNVTADAFGLTFKSGNACILRGGSDSINSNIAIADVIANALSDNGINPDVINLIKDTDRALVNQLMKMNDYIDVIIPRGGAGLIKNVVNNSTVPVIETGTGNCHVYVDEYADIDMAVKVIYNAKTSRIGVCNACESLVIHKAVAKQAIPLIVNALKEKNVEVRGDEYAMQCDSRIVPASDDDWGMEYLDYIISVKTVDSVDEAIEHINTYNTGHSESIITKDYNNANRFLDEIDAACVYVNASTRFSDGFEFGFGAEIGISTQKLHARGPMGLKALTTTKYVIYGEGQIRQ.

The protein belongs to the gamma-glutamyl phosphate reductase family.

Its subcellular location is the cytoplasm. It carries out the reaction L-glutamate 5-semialdehyde + phosphate + NADP(+) = L-glutamyl 5-phosphate + NADPH + H(+). The protein operates within amino-acid biosynthesis; L-proline biosynthesis; L-glutamate 5-semialdehyde from L-glutamate: step 2/2. Functionally, catalyzes the NADPH-dependent reduction of L-glutamate 5-phosphate into L-glutamate 5-semialdehyde and phosphate. The product spontaneously undergoes cyclization to form 1-pyrroline-5-carboxylate. This Lachnospira eligens (strain ATCC 27750 / DSM 3376 / VPI C15-48 / C15-B4) (Eubacterium eligens) protein is Gamma-glutamyl phosphate reductase.